We begin with the raw amino-acid sequence, 144 residues long: Large ribosomal subunit protein uL11 (144 aa).

Belongs to the universal ribosomal protein uL11 family. Part of the ribosomal stalk of the 50S ribosomal subunit. Interacts with L10 and the large rRNA to form the base of the stalk. L10 forms an elongated spine to which L12 dimers bind in a sequential fashion forming a multimeric L10(L12)X complex. In terms of processing, one or more lysine residues are methylated.

Functionally, forms part of the ribosomal stalk which helps the ribosome interact with GTP-bound translation factors. The chain is Large ribosomal subunit protein uL11 from Rickettsia bellii (strain OSU 85-389).